The chain runs to 1017 residues: LSVTRKQCLELGMVLSLSPMGTYLEGTMGCLQLKHGHGGFVIHNTTQLRIHFIQGKDAILIRMPKIFLRLQSATSLDNQNVRNEFAWLEQTFKRRAYGQQSQSSSIILPEGKGSFWIHWITTQDGFCGLPLVSVNDGHVVGIHGLTSNDSEKNFFVPFTDGFEKEYLDNADNLSWDKHWFWEPSKIAWGPLNLVEEQPKEEFKISKLVSDLFGNTVAVQSRKERWVLDAMEGNLVACGQADSALVTKHVVKGKCPYFAQYLSLHDGAXQFFEPLMGAYQPSRLNKDAFKKDFFKYNKPVVLNEVDFNAFEKAVEGVITMMVDFEFAECLFVTDPDEIYGSLNMKAAVGAQYKGKKQDYFSGMDSFDKERLLYLSCERLFNGEKGIWNGSLKAELRPIEKVQANKTRTFTAAPLDTLLGAKVCVDDFNNQFYSFNLKCPWTVGMTKFYGGWDKLMRSLPDGWTYCHADGSQFDSSLTPLLLNAVLSIRCCFMEDWWVGREMLENLYAEIVYTPILAPDGTIFKKFRGNNSGQPSTVVDNTLMVVIAMYYSCCKQGWSEEDIERRLVFFANGDDIILAVKDEDVWLYDTLSASFAELGLNYNFDERTKKREELWFMSHQAMLVDGIYIPKLEPERIVSILEWDRSKELMHRTEAICAAMIEAWGYTELLQEIRKFYLWLLSKDEFKELAASGKAPYIAETALRKLYTDVNTQPSELQRYLEVLDFNHIDGCCESVSLQSGKETVENLDAGKESKKDASDKGNKPQNSQVGQGSKEPTKTGTVSKDVNVGSKGKEVPRLQKITKKMNLPTVGGKIILSLDHLLEYKPSQVDLFNTRATKTQFESWYSAVKVEYDLNDEQMGVIMNGFMVWCIDNGTSPDVNGVWVMMDGEEQVEYPLKPIVENAKPTLRQIMHHFSDAAEAYIEMRNSESPYMPRYGLLRNLRDRELARYAFDFYEVTSKTPNRAREAIAQMKAAALAGVNSRLFGLDGNISTNSENTGRHTARDVNQNMHTLLGMGPPQ.

Residues 1-195 enclose the Peptidase C4 domain; sequence LSVTRKQCLE…IAWGPLNLVE (195 aa). Residues Asp57 and Cys127 each act as for nuclear inclusion protein A activity in the active site. A RdRp catalytic domain is found at 461–585; it reads WTYCHADGSQ…AVKDEDVWLY (125 aa). The span at 746–760 shows a compositional bias: basic and acidic residues; sequence DAGKESKKDASDKGN. Positions 746–787 are disordered; it reads DAGKESKKDASDKGNKPQNSQVGQGSKEPTKTGTVSKDVNVG.

This sequence belongs to the potyviridae genome polyprotein family. Post-translationally, genome polyprotein of potyviruses undergoes post-translational proteolytic processing by the main proteinase NIa-pro resulting in the production of at least ten individual proteins. The P1 proteinase and the HC-pro cleave only their respective C-termini autocatalytically. 6K1 is essential for proper proteolytic separation of P3 from CI.

The protein localises to the virion. It carries out the reaction Hydrolyzes glutaminyl bonds, and activity is further restricted by preferences for the amino acids in P6 - P1' that vary with the species of potyvirus, e.g. Glu-Xaa-Xaa-Tyr-Xaa-Gln-|-(Ser or Gly) for the enzyme from tobacco etch virus. The natural substrate is the viral polyprotein, but other proteins and oligopeptides containing the appropriate consensus sequence are also cleaved.. The catalysed reaction is RNA(n) + a ribonucleoside 5'-triphosphate = RNA(n+1) + diphosphate. Has RNA-binding and proteolytic activities. Functionally, an RNA-dependent RNA polymerase that plays an essential role in the virus replication. In terms of biological role, involved in aphid transmission, cell-to-cell and systemis movement, encapsidation of the viral RNA and in the regulation of viral RNA amplification. The polypeptide is Genome polyprotein (Watermelon mosaic virus II (isolate USA)).